A 340-amino-acid chain; its full sequence is GTP-binding protein REM 2 (340 aa).

Residues 1-13 (MHTDLDTDMDMDT) are compositionally biased toward acidic residues. Residues 1–107 (MHTDLDTDMD…SDSLGSGEAA (107 aa)) form a disordered region. Ser27 carries the phosphoserine modification. The segment covering 40-53 (LLKKSEKLLAELDR) has biased composition (basic and acidic residues). Residues 93 to 104 (SSSGSSDSLGSG) are compositionally biased toward low complexity. Residues 121 to 128 (GESGVGKS), 229 to 232 (NKSD), and 260 to 261 (AA) each bind GTP. The interval 283–308 (RNHAGGQRPDPGSPEGPAPPARRESL) is disordered. Residues 293 to 302 (PGSPEGPAPP) are compositionally biased toward pro residues. Ser295 bears the Phosphoserine mark.

Belongs to the small GTPase superfamily. RGK family.

It localises to the cell membrane. Binds GTP saturably and exhibits a low intrinsic rate of GTP hydrolysis. The sequence is that of GTP-binding protein REM 2 (REM2) from Homo sapiens (Human).